Reading from the N-terminus, the 1014-residue chain is Pre-mRNA-processing ATP-dependent RNA helicase prp11 (1014 aa).

Over residues 1-11 the composition is skewed to basic residues; sequence MSRRTRSRSPP. Residues 1–149 are disordered; sequence MSRRTRSRSP…SRFDRTERVG (149 aa). 2 stretches are compositionally biased toward basic and acidic residues: residues 15-87 and 106-121; these read YNRE…EYAR and RHAEEKEVDNKTKSDE. A Q motif motif is present at residues 418–446; sequence TSWSQCGLSAQTISVINSLGYEKPTSIQA. Positions 449-627 constitute a Helicase ATP-binding domain; the sequence is IPAITSGRDV…RKVLKKPVEI (179 aa). Position 462-469 (462-469) interacts with ATP; that stretch reads AKTGSGKT. The DEAD box signature appears at 575–578; the sequence is DEAD. Residues 638 to 802 form the Helicase C-terminal domain; sequence EVEQIVEVRP…PVPKELQTLA (165 aa). A disordered region spans residues 815-875; that stretch reads KAAGGGFGGK…PEKSTGDPTL (61 aa). Basic and acidic residues-rich tracts occupy residues 827-838 and 855-875; these read SRLDETRNAERK and AEAKSPLEKITPEKSTGDPTL.

The protein belongs to the DEAD box helicase family. DDX46/PRP5 subfamily.

Its subcellular location is the nucleus. It carries out the reaction ATP + H2O = ADP + phosphate + H(+). In terms of biological role, ATP-dependent RNA helicase involved in pre-spliceosome/complex A assembly and mRNA splicing. Bridges U1 and U2 snRNPs during pre-spliceosome assembly and enables stable U2 snRNP association with intron RNA. Through its helicase activity probably catalyzes an ATP-dependent conformational change of U2 snRNP. This chain is Pre-mRNA-processing ATP-dependent RNA helicase prp11 (prp11), found in Schizosaccharomyces pombe (strain 972 / ATCC 24843) (Fission yeast).